Reading from the N-terminus, the 464-residue chain is ATP-dependent protease ATPase subunit HslU (464 aa).

ATP is bound by residues valine 18, 60–65 (GVGKTE), aspartate 277, glutamate 342, and arginine 414.

The protein belongs to the ClpX chaperone family. HslU subfamily. In terms of assembly, a double ring-shaped homohexamer of HslV is capped on each side by a ring-shaped HslU homohexamer. The assembly of the HslU/HslV complex is dependent on binding of ATP.

The protein localises to the cytoplasm. In terms of biological role, ATPase subunit of a proteasome-like degradation complex; this subunit has chaperone activity. The binding of ATP and its subsequent hydrolysis by HslU are essential for unfolding of protein substrates subsequently hydrolyzed by HslV. HslU recognizes the N-terminal part of its protein substrates and unfolds these before they are guided to HslV for hydrolysis. The protein is ATP-dependent protease ATPase subunit HslU of Lactobacillus delbrueckii subsp. bulgaricus (strain ATCC 11842 / DSM 20081 / BCRC 10696 / JCM 1002 / NBRC 13953 / NCIMB 11778 / NCTC 12712 / WDCM 00102 / Lb 14).